The chain runs to 168 residues: ATP synthase F(1) complex subunit delta, mitochondrial (168 aa).

The N-terminal 22 residues, 1-22, are a transit peptide targeting the mitochondrion; the sequence is MLPAALLRRPGLGRLVRHARAY. 2 positions are modified to N6-acetyllysine; alternate: K136 and K165. Residues K136 and K165 each carry the N6-succinyllysine; alternate modification.

The protein belongs to the ATPase epsilon chain family. Component of the ATP synthase complex composed at least of ATP5F1A/subunit alpha, ATP5F1B/subunit beta, ATP5MC1/subunit c (homooctomer), MT-ATP6/subunit a, MT-ATP8/subunit 8, ATP5ME/subunit e, ATP5MF/subunit f, ATP5MG/subunit g, ATP5MK/subunit k, ATP5MJ/subunit j, ATP5F1C/subunit gamma, ATP5F1D/subunit delta, ATP5F1E/subunit epsilon, ATP5PF/subunit F6, ATP5PB/subunit b, ATP5PD/subunit d, ATP5PO/subunit OSCP. ATP synthase complex consists of a soluble F(1) head domain (subunits alpha(3) and beta(3)) - the catalytic core - and a membrane F(0) domain - the membrane proton channel (subunits c, a, 8, e, f, g, k and j). These two domains are linked by a central stalk (subunits gamma, delta, and epsilon) rotating inside the F1 region and a stationary peripheral stalk (subunits F6, b, d, and OSCP). Component of a complex composed at least by ATPIF1, ATP5F1A, ATP5F1B, ATP5F1C AND ATP5F1E.

The protein resides in the mitochondrion. Its subcellular location is the mitochondrion inner membrane. In terms of biological role, subunit delta, of the mitochondrial membrane ATP synthase complex (F(1)F(0) ATP synthase or Complex V) that produces ATP from ADP in the presence of a proton gradient across the membrane which is generated by electron transport complexes of the respiratory chain. ATP synthase complex consist of a soluble F(1) head domain - the catalytic core - and a membrane F(1) domain - the membrane proton channel. These two domains are linked by a central stalk rotating inside the F(1) region and a stationary peripheral stalk. During catalysis, ATP synthesis in the catalytic domain of F(1) is coupled via a rotary mechanism of the central stalk subunits to proton translocation. In vivo, can only synthesize ATP although its ATP hydrolase activity can be activated artificially in vitro. With the central stalk subunit gamma, is essential for the biogenesis of F(1) catalytic part of the ATP synthase complex namely in the formation of F1 assembly intermediate. The protein is ATP synthase F(1) complex subunit delta, mitochondrial of Homo sapiens (Human).